Consider the following 92-residue polypeptide: Small ribosomal subunit protein uS19c (92 aa).

Belongs to the universal ribosomal protein uS19 family.

It localises to the plastid. The protein resides in the chloroplast. Functionally, protein S19 forms a complex with S13 that binds strongly to the 16S ribosomal RNA. In Eucalyptus globulus subsp. globulus (Tasmanian blue gum), this protein is Small ribosomal subunit protein uS19c.